The chain runs to 129 residues: Small ribosomal subunit protein uS11 (129 aa).

This sequence belongs to the universal ribosomal protein uS11 family. Part of the 30S ribosomal subunit. Interacts with proteins S7 and S18. Binds to IF-3.

In terms of biological role, located on the platform of the 30S subunit, it bridges several disparate RNA helices of the 16S rRNA. Forms part of the Shine-Dalgarno cleft in the 70S ribosome. The polypeptide is Small ribosomal subunit protein uS11 (Halalkalibacterium halodurans (strain ATCC BAA-125 / DSM 18197 / FERM 7344 / JCM 9153 / C-125) (Bacillus halodurans)).